A 305-amino-acid chain; its full sequence is Acetylglutamate kinase (305 aa).

Substrate is bound by residues 67-68 (GG), Arg-89, and Asn-190.

The protein belongs to the acetylglutamate kinase family. ArgB subfamily.

The protein localises to the cytoplasm. The catalysed reaction is N-acetyl-L-glutamate + ATP = N-acetyl-L-glutamyl 5-phosphate + ADP. It functions in the pathway amino-acid biosynthesis; L-arginine biosynthesis; N(2)-acetyl-L-ornithine from L-glutamate: step 2/4. In terms of biological role, catalyzes the ATP-dependent phosphorylation of N-acetyl-L-glutamate. The protein is Acetylglutamate kinase of Bifidobacterium longum (strain NCC 2705).